A 102-amino-acid polypeptide reads, in one-letter code: NADH-quinone oxidoreductase subunit K (102 aa).

A run of 3 helical transmembrane segments spans residues 6-26 (MEHGLLLAAALFCIGLCGLLI), 30-50 (LLYILMSIEIMMNASALAFVV), and 65-85 (ILVISLAAAEASIGLALLLLL).

The protein belongs to the complex I subunit 4L family. As to quaternary structure, NDH-1 is composed of 13 different subunits. Subunits NuoA, H, J, K, L, M, N constitute the membrane sector of the complex.

It is found in the cell inner membrane. The enzyme catalyses a quinone + NADH + 5 H(+)(in) = a quinol + NAD(+) + 4 H(+)(out). Functionally, NDH-1 shuttles electrons from NADH, via FMN and iron-sulfur (Fe-S) centers, to quinones in the respiratory chain. The immediate electron acceptor for the enzyme in this species is believed to be ubiquinone. Couples the redox reaction to proton translocation (for every two electrons transferred, four hydrogen ions are translocated across the cytoplasmic membrane), and thus conserves the redox energy in a proton gradient. The polypeptide is NADH-quinone oxidoreductase subunit K (Shewanella oneidensis (strain ATCC 700550 / JCM 31522 / CIP 106686 / LMG 19005 / NCIMB 14063 / MR-1)).